The sequence spans 555 residues: Formate--tetrahydrofolate ligase (555 aa).

64–71 contacts ATP; sequence TPAGEGKT.

The protein belongs to the formate--tetrahydrofolate ligase family.

The catalysed reaction is (6S)-5,6,7,8-tetrahydrofolate + formate + ATP = (6R)-10-formyltetrahydrofolate + ADP + phosphate. It participates in one-carbon metabolism; tetrahydrofolate interconversion. The sequence is that of Formate--tetrahydrofolate ligase from Dinoroseobacter shibae (strain DSM 16493 / NCIMB 14021 / DFL 12).